The sequence spans 166 residues: NADH-quinone oxidoreductase subunit B (166 aa).

Positions 44, 45, 110, and 140 each coordinate [4Fe-4S] cluster.

The protein belongs to the complex I 20 kDa subunit family. As to quaternary structure, NDH-1 is composed of 14 different subunits. Subunits NuoB, C, D, E, F, and G constitute the peripheral sector of the complex. Requires [4Fe-4S] cluster as cofactor.

The protein resides in the cell membrane. The catalysed reaction is a quinone + NADH + 5 H(+)(in) = a quinol + NAD(+) + 4 H(+)(out). Its function is as follows. NDH-1 shuttles electrons from NADH, via FMN and iron-sulfur (Fe-S) centers, to quinones in the respiratory chain. The immediate electron acceptor for the enzyme in this species is believed to be a menaquinone. Couples the redox reaction to proton translocation (for every two electrons transferred, four hydrogen ions are translocated across the cytoplasmic membrane), and thus conserves the redox energy in a proton gradient. This is NADH-quinone oxidoreductase subunit B from Carboxydothermus hydrogenoformans (strain ATCC BAA-161 / DSM 6008 / Z-2901).